The chain runs to 291 residues: Oxidative stress-responsive serine-rich protein 1 (291 aa).

Residues 29–139 (ISLSVGEGPS…NAGENSTSLD (111 aa)) form a disordered region. Basic residues predominate over residues 65-83 (STRKSSRGAVRTQRRRRSK). A compositionally biased stretch (polar residues) spans 95 to 105 (CSTTAPPSSSQ). A Phosphothreonine modification is found at Thr-143.

This Mus musculus (Mouse) protein is Oxidative stress-responsive serine-rich protein 1 (Oser1).